The chain runs to 236 residues: MSQLPAVSSAPQTGAASRDRRLPQAEVGGGRRALPGPARPGETRGRPMAAAREGPAAPAAAARGGRVAAAREGRAAAARGGPGAAPRGGAAAREGPAAAAASREARMAEVARLLGDPLEEEAPEGRPRSRAGGLAAMPYMRFRHPLSVLGINYQQFLRHYLENYPIAPGRIQELEERRRRFVEACRAREAAFDIEYLRNPQRVDFDILTFTIALTASEVINPLIEELGCDKFIHRE.

Positions 1 to 15 (MSQLPAVSSAPQTGA) are enriched in polar residues. Residues 1–102 (MSQLPAVSSA…REGPAAAAAS (102 aa)) form a disordered region. Composition is skewed to low complexity over residues 32-68 (RALP…GRVA) and 75-102 (AAAA…AAAS). Omega-N-methylarginine occurs at positions 63 and 79. Residues 170–190 (RIQELEERRRRFVEACRAREA) adopt a coiled-coil conformation.

Heterodimer with EID2B. Interacts with the C-terminus of EP300. Interacts with HDAC1 and HDAC2. Interacts with SMAD2, SMAD4 and with the MH2 domain of SMAD3. Expressed in heart, brain, kidney and pancreas. Not detected in placenta.

Its subcellular location is the nucleus. In terms of biological role, interacts with EP300 and acts as a repressor of MYOD-dependent transcription and muscle differentiation. Inhibits EP300 histone acetyltransferase activity. Acts as a repressor of TGFB/SMAD transcriptional responses. May act as a repressor of the TGFB/SMAD3-dependent signaling by selectively blocking formation of TGFB-induced SMAD3-SMAD4 complex. The polypeptide is EP300-interacting inhibitor of differentiation 2 (Mus musculus (Mouse)).